The following is a 417-amino-acid chain: CinA-like protein (417 aa).

The protein belongs to the CinA family.

This is CinA-like protein from Synechococcus sp. (strain RCC307).